A 358-amino-acid chain; its full sequence is Histidinol-phosphate aminotransferase (358 aa).

K211 bears the N6-(pyridoxal phosphate)lysine mark.

Belongs to the class-II pyridoxal-phosphate-dependent aminotransferase family. Histidinol-phosphate aminotransferase subfamily. Homodimer. Requires pyridoxal 5'-phosphate as cofactor.

It catalyses the reaction L-histidinol phosphate + 2-oxoglutarate = 3-(imidazol-4-yl)-2-oxopropyl phosphate + L-glutamate. It functions in the pathway amino-acid biosynthesis; L-histidine biosynthesis; L-histidine from 5-phospho-alpha-D-ribose 1-diphosphate: step 7/9. This Blochmanniella pennsylvanica (strain BPEN) protein is Histidinol-phosphate aminotransferase.